We begin with the raw amino-acid sequence, 244 residues long: Carbonic anhydrase (244 aa).

The signal sequence occupies residues 1-19 (MKGKLSIALMLSVCFSASA). In terms of domain architecture, Alpha-carbonic anhydrase spans 23-244 (VHWGYEGNGD…QPLNGRIIIH (222 aa)). C46 and C199 form a disulfide bridge. H84 serves as the catalytic Proton acceptor. Positions 109, 111, and 128 each coordinate Zn(2+). Position 195-196 (195-196 (TT)) interacts with substrate.

It belongs to the alpha-carbonic anhydrase family. Zn(2+) serves as cofactor.

It localises to the periplasm. It carries out the reaction hydrogencarbonate + H(+) = CO2 + H2O. Its function is as follows. Reversible hydration of carbon dioxide. The sequence is that of Carbonic anhydrase (cah) from Pectobacterium carotovorum (Erwinia carotovora).